Here is a 271-residue protein sequence, read N- to C-terminus: Delta(3,5)-Delta(2,4)-dienoyl-CoA isomerase (271 aa).

Substrate-binding positions include 62–66 (SGGKF) and Leu120. The active-site Proton donor/acceptor is the Glu152. The short motif at 269–271 (HKL) is the Peroxisome targeting signal (PTS1) element.

It belongs to the enoyl-CoA hydratase/isomerase family. Interacts with ECI1.

It is found in the peroxisome. The enzyme catalyses a (3E,5Z)-dienoyl-CoA = a (2E,4E)-(5,6-saturated)-dienoyl-CoA. The protein operates within lipid metabolism; fatty acid beta-oxidation. Peroxisomal di-isomerase that is involved in fatty acid metabolism enzyme by converting 3,5-dienoyl-CoAs to the corresponding 2,4-dienoyl-CoAs. Required for ECI1 to be located to the peroxisome. The chain is Delta(3,5)-Delta(2,4)-dienoyl-CoA isomerase from Saccharomyces cerevisiae (strain ATCC 204508 / S288c) (Baker's yeast).